The sequence spans 117 residues: Large ribosomal subunit protein uL18 (117 aa).

Belongs to the universal ribosomal protein uL18 family. Part of the 50S ribosomal subunit; part of the 5S rRNA/L5/L18/L25 subcomplex. Contacts the 5S and 23S rRNAs.

In terms of biological role, this is one of the proteins that bind and probably mediate the attachment of the 5S RNA into the large ribosomal subunit, where it forms part of the central protuberance. The sequence is that of Large ribosomal subunit protein uL18 from Buchnera aphidicola subsp. Acyrthosiphon kondoi (Acyrthosiphon kondoi symbiotic bacterium).